A 516-amino-acid polypeptide reads, in one-letter code: 3-phosphoshikimate 1-carboxyvinyltransferase, chloroplastic (516 aa).

Residues 1–72 (MAQSSRICHG…KVTASVSTSE (72 aa)) constitute a chloroplast transit peptide. Positions 95, 96, and 100 each coordinate 3-phosphoshikimate. Phosphoenolpyruvate is bound at residue Lys95. 2 residues coordinate phosphoenolpyruvate: Gly173 and Arg203. The 3-phosphoshikimate site is built by Ser250, Ser251, Gln252, Ser278, Asp403, and Lys430. Phosphoenolpyruvate is bound at residue Gln252. The Proton acceptor role is filled by Asp403. Phosphoenolpyruvate is bound by residues Arg434, Arg476, and Lys501.

It belongs to the EPSP synthase family.

The protein localises to the plastid. Its subcellular location is the chloroplast. It carries out the reaction 3-phosphoshikimate + phosphoenolpyruvate = 5-O-(1-carboxyvinyl)-3-phosphoshikimate + phosphate. Its pathway is metabolic intermediate biosynthesis; chorismate biosynthesis; chorismate from D-erythrose 4-phosphate and phosphoenolpyruvate: step 6/7. Functionally, catalyzes the transfer of the enolpyruvyl moiety of phosphoenolpyruvate (PEP) to the 5-hydroxyl of shikimate-3-phosphate (S3P) to produce enolpyruvyl shikimate-3-phosphate and inorganic phosphate. The chain is 3-phosphoshikimate 1-carboxyvinyltransferase, chloroplastic from Brassica napus (Rape).